A 499-amino-acid polypeptide reads, in one-letter code: uncharacterized protein (499 aa).

Transmembrane regions (helical) follow at residues 5–25 (FLLVLIPVLILYFYNLGYNAV), 79–99 (LGLRFFHALLGVFTGVLTYLL), 110–130 (ALLSFLILSLSFIFIANARYA), 132–152 (PEVPFTFFITLSLYLWYEYFT), 170–190 (VLTKGPAGFVLPAGVVFFYLL), 203–223 (YAGTLMVFLLSGWWFLYQYLV), 252–272 (ALDINVSFLPYSFLFFFALFW), 286–306 (VWFSFIFLIFSIVKMKIPVYI), 332–352 (LSLIFLWTVLVLATLALSLYF), 354–374 (FSATLFPLIPLLLLPFFLKKY), and 377–397 (LPAFGAFAFLFYLSSVILPYV).

It belongs to the glycosyltransferase 39 family.

The protein resides in the cell membrane. This is an uncharacterized protein from Aquifex aeolicus (strain VF5).